A 428-amino-acid chain; its full sequence is Enolase (428 aa).

Position 167 (glutamine 167) interacts with (2R)-2-phosphoglycerate. Residue glutamate 209 is the Proton donor of the active site. Mg(2+) is bound by residues aspartate 246, glutamate 289, and aspartate 316. 4 residues coordinate (2R)-2-phosphoglycerate: lysine 341, arginine 370, serine 371, and lysine 392. Lysine 341 acts as the Proton acceptor in catalysis.

This sequence belongs to the enolase family. Component of the RNA degradosome, a multiprotein complex involved in RNA processing and mRNA degradation. Mg(2+) is required as a cofactor.

The protein resides in the cytoplasm. It is found in the secreted. The protein localises to the cell surface. It catalyses the reaction (2R)-2-phosphoglycerate = phosphoenolpyruvate + H2O. It functions in the pathway carbohydrate degradation; glycolysis; pyruvate from D-glyceraldehyde 3-phosphate: step 4/5. Its function is as follows. Catalyzes the reversible conversion of 2-phosphoglycerate (2-PG) into phosphoenolpyruvate (PEP). It is essential for the degradation of carbohydrates via glycolysis. The chain is Enolase from Saccharophagus degradans (strain 2-40 / ATCC 43961 / DSM 17024).